An 89-amino-acid polypeptide reads, in one-letter code: Small ribosomal subunit protein uS15 (89 aa).

This sequence belongs to the universal ribosomal protein uS15 family. In terms of assembly, part of the 30S ribosomal subunit. Forms a bridge to the 50S subunit in the 70S ribosome, contacting the 23S rRNA.

Functionally, one of the primary rRNA binding proteins, it binds directly to 16S rRNA where it helps nucleate assembly of the platform of the 30S subunit by binding and bridging several RNA helices of the 16S rRNA. In terms of biological role, forms an intersubunit bridge (bridge B4) with the 23S rRNA of the 50S subunit in the ribosome. This is Small ribosomal subunit protein uS15 from Kineococcus radiotolerans (strain ATCC BAA-149 / DSM 14245 / SRS30216).